Consider the following 907-residue polypeptide: Protein translocase subunit SecA (907 aa).

Residues Gln-87, Gly-105–Thr-109, and Asp-512 each bind ATP. Positions 891, 893, 902, and 903 each coordinate Zn(2+).

The protein belongs to the SecA family. In terms of assembly, monomer and homodimer. Part of the essential Sec protein translocation apparatus which comprises SecA, SecYEG and auxiliary proteins SecDF-YajC and YidC. Zn(2+) is required as a cofactor.

It is found in the cell inner membrane. Its subcellular location is the cytoplasm. It catalyses the reaction ATP + H2O + cellular proteinSide 1 = ADP + phosphate + cellular proteinSide 2.. Its function is as follows. Part of the Sec protein translocase complex. Interacts with the SecYEG preprotein conducting channel. Has a central role in coupling the hydrolysis of ATP to the transfer of proteins into and across the cell membrane, serving both as a receptor for the preprotein-SecB complex and as an ATP-driven molecular motor driving the stepwise translocation of polypeptide chains across the membrane. The protein is Protein translocase subunit SecA of Shewanella loihica (strain ATCC BAA-1088 / PV-4).